Consider the following 364-residue polypeptide: RNA polymerase II holoenzyme cyclin-like subunit (364 aa).

Positions 53 to 143 constitute a Cyclin N-terminal domain; sequence QQINRLSKRI…VGECEFSLIS (91 aa). Residues 268-303 form a disordered region; that stretch reads PGFGSQGSQQQAGFSQGNSQGSLQGDSAAAEPKKVT. Over residues 273–289 the composition is skewed to low complexity; that stretch reads QGSQQQAGFSQGNSQGS.

Belongs to the cyclin family. Cyclin C subfamily. Component of the SRB8-11 complex, a regulatory module of the Mediator complex.

It is found in the nucleus. Component of the SRB8-11 complex. The SRB8-11 complex is a regulatory module of the Mediator complex which is itself involved in regulation of basal and activated RNA polymerase II-dependent transcription. The SRB8-11 complex may be involved in the transcriptional repression of a subset of genes regulated by Mediator. It may inhibit the association of the Mediator complex with RNA polymerase II to form the holoenzyme complex. The SRB8-11 complex phosphorylates the C-terminal domain (CTD) of the largest subunit of RNA polymerase II. The polypeptide is RNA polymerase II holoenzyme cyclin-like subunit (SSN8) (Chaetomium globosum (strain ATCC 6205 / CBS 148.51 / DSM 1962 / NBRC 6347 / NRRL 1970) (Soil fungus)).